Consider the following 224-residue polypeptide: Haloacetate dehalogenase H-2 (224 aa).

The active-site Nucleophile is aspartate 10.

The protein belongs to the HAD-like hydrolase superfamily. S-2-haloalkanoic acid dehalogenase family.

It carries out the reaction a haloacetate + H2O = a halide anion + glycolate + H(+). The polypeptide is Haloacetate dehalogenase H-2 (dehH2) (Moraxella sp. (strain B)).